A 170-amino-acid polypeptide reads, in one-letter code: Large ribosomal subunit protein uL22c (170 aa).

It belongs to the universal ribosomal protein uL22 family. In terms of assembly, part of the 50S ribosomal subunit.

Its subcellular location is the plastid. It localises to the chloroplast. This protein binds specifically to 23S rRNA. Its function is as follows. The globular domain of the protein is located near the polypeptide exit tunnel on the outside of the subunit, while an extended beta-hairpin is found that lines the wall of the exit tunnel in the center of the 70S ribosome. This is Large ribosomal subunit protein uL22c (rpl22) from Nandina domestica (Heavenly bamboo).